The following is a 425-amino-acid chain: Proline--tRNA ligase (425 aa).

It belongs to the class-II aminoacyl-tRNA synthetase family. ProS type 2 subfamily. As to quaternary structure, homodimer.

Its subcellular location is the cytoplasm. The catalysed reaction is tRNA(Pro) + L-proline + ATP = L-prolyl-tRNA(Pro) + AMP + diphosphate. Catalyzes the attachment of proline to tRNA(Pro) in a two-step reaction: proline is first activated by ATP to form Pro-AMP and then transferred to the acceptor end of tRNA(Pro). In Wolbachia sp. subsp. Brugia malayi (strain TRS), this protein is Proline--tRNA ligase.